The sequence spans 464 residues: Aspartyl protease 37 (464 aa).

The first 19 residues, 1–19, serve as a signal peptide directing secretion; that stretch reads MNAAVLLLLLALAALPASC. Asn41 carries an N-linked (GlcNAc...) asparagine glycan. Residues 89-456 enclose the Peptidase A1 domain; sequence YLVKLGIGTP…NLRRGRVTFV (368 aa). Asp107 is an active-site residue. A disulfide bond links Cys117 and Cys123. Asn174 and Asn261 each carry an N-linked (GlcNAc...) asparagine glycan. Residues 299–311 show a composition bias toward low complexity; it reads TTTTTATATATAP. Residues 299–319 are disordered; it reads TTTTTATATATAPAPAPTPSP. N-linked (GlcNAc...) asparagine glycosylation is present at Asn320. Residue Asp337 is part of the active site. Residues Cys376 and Cys420 are joined by a disulfide bond.

This sequence belongs to the peptidase A1 family.

Anther-specific aspartic protease involved in tapetal programmed cell death (PCD). Directly regulated by the transcription factor EAT1/DTD in anthers during tapetum PCD and degeneration. This Oryza sativa subsp. japonica (Rice) protein is Aspartyl protease 37.